A 261-amino-acid polypeptide reads, in one-letter code: DNA repair protein RecO (261 aa).

The protein belongs to the RecO family.

In terms of biological role, involved in DNA repair and RecF pathway recombination. The polypeptide is DNA repair protein RecO (Chlorobium phaeobacteroides (strain BS1)).